A 137-amino-acid chain; its full sequence is MTMETLPKVLEVDEKSPEAKDLLPSQTASSLCISSRSESVWTTTPRSNWEIYRKPIVIMSVGGAILLFGVVITCLAYTLKLSDKSLSILKMVGPGFLSLGLMMLVCGLVWVPIIKKKQKHRQKSNFLRSLKSFFLTR.

2 consecutive transmembrane segments (helical) span residues 56–76 (IVIMSVGGAILLFGVVITCLA) and 94–114 (PGFLSLGLMMLVCGLVWVPII).

In terms of assembly, interacts with TRPV1.

It is found in the membrane. Its function is as follows. Regulatory subunit of TRPV1, a molecular sensor of noxious heat and capsaicin. Positively regulates TRPV1 channel activity via phosphatidylinositol 4,5-bisphosphate (PIP2). Binds various phosphoinositide, including phosphatidylinositol 4,5-bisphosphate (PIP2), but not phosphatidylinositol (PI). The chain is Phosphoinositide-interacting protein (PIRT) from Homo sapiens (Human).